We begin with the raw amino-acid sequence, 1066 residues long: FHIP family protein GH13096 (1066 aa).

Residues 1–15 (MSWLRTSPLRQSLTR) are compositionally biased toward polar residues. Residues 1 to 33 (MSWLRTSPLRQSLTRNSGGNGSGGSGNSGNASA) form a disordered region. A compositionally biased stretch (gly residues) spans 18 to 27 (GGNGSGGSGN). Ser-512 carries the phosphoserine modification. Disordered stretches follow at residues 647–688 (SFKW…NSSG), 827–885 (DNSP…RSDN), and 942–1010 (SRGV…FNSE). The segment covering 658–687 (NDATTTTATSDPDVEHNNSSNHNNSSINSS) has biased composition (low complexity). At Ser-829 the chain carries Phosphoserine. The span at 836–856 (HQQQQLQHTTNSTHQQQQAQQ) shows a compositional bias: low complexity. Residues 950-963 (PRGNTCETSLSTTP) show a composition bias toward polar residues. Over residues 967–996 (AQATSASSTNSSIGGSTQTLSATHSSSTLH) the composition is skewed to low complexity. Positions 1001–1010 (GPQTASFNSE) are enriched in polar residues.

Belongs to the FHIP family.

The protein is FHIP family protein GH13096 of Drosophila grimshawi (Hawaiian fruit fly).